The sequence spans 367 residues: Aminomethyltransferase (367 aa).

The protein belongs to the GcvT family. In terms of assembly, the glycine cleavage system is composed of four proteins: P, T, L and H.

The catalysed reaction is N(6)-[(R)-S(8)-aminomethyldihydrolipoyl]-L-lysyl-[protein] + (6S)-5,6,7,8-tetrahydrofolate = N(6)-[(R)-dihydrolipoyl]-L-lysyl-[protein] + (6R)-5,10-methylene-5,6,7,8-tetrahydrofolate + NH4(+). In terms of biological role, the glycine cleavage system catalyzes the degradation of glycine. The sequence is that of Aminomethyltransferase from Saccharopolyspora erythraea (strain ATCC 11635 / DSM 40517 / JCM 4748 / NBRC 13426 / NCIMB 8594 / NRRL 2338).